Reading from the N-terminus, the 213-residue chain is MOB kinase activator-like 1 homolog A (213 aa).

Zn(2+) is bound by residues C77, C82, H159, and H164.

The protein belongs to the MOB1/phocein family.

In Dictyostelium discoideum (Social amoeba), this protein is MOB kinase activator-like 1 homolog A (mobA).